The primary structure comprises 337 residues: Peroxisome biogenesis factor 10 (337 aa).

The Peroxisomal matrix portion of the chain corresponds to 1-24; that stretch reads MKNDNKLQKEALMRLSQLRFPFAD. Residues 25 to 54 form a helical membrane-spanning segment; that stretch reads APSIVQAHQKDEQIQGLLIMKVTELCKLIK. S55 is a topological domain (cytoplasmic). A helical membrane pass occupies residues 56–77; it reads QLFVNSYPKELSIFAKLLYLLF. Residues 78 to 105 are Peroxisomal matrix-facing; the sequence is TTGRRGRTLGEEYVDLTYTNRKGTRLAG. The chain crosses the membrane as a helical span at residues 106–138; the sequence is RLKMIVFAFAYPLCPYFITKLYKKIMKNNKESK. Over 139–145 the chain is Cytoplasmic; it reads IEDTESV. A helical transmembrane segment spans residues 146–166; that stretch reads AAFCKGLLDFILDVHMTLFYF. The Peroxisomal matrix segment spans residues 167-202; it reads KGAFYSISKRIFGMRYVFKHILSKNEANFREEGSQK. The chain crosses the membrane as a helical span at residues 203-222; that stretch reads YKVLGYILLAQNVMKWYPVL. Residues 223 to 337 are Cytoplasmic-facing; the sequence is TSTLGSWIYG…QPQEILVLRQ (115 aa). 8 residues coordinate Zn(2+): C286, C289, C301, H303, C306, C309, C320, and C323. The RING-type zinc-finger motif lies at 286–327; it reads CILCLMNMSDPSCAPCGHLFCWSCLMSWCKERPECPLCRQHC.

The protein belongs to the pex2/pex10/pex12 family. As to quaternary structure, component of the PEX2-PEX10-PEX12 retrotranslocation channel, composed of PEX2, PEX10 and PEX12.

It localises to the peroxisome membrane. The enzyme catalyses S-ubiquitinyl-[E2 ubiquitin-conjugating enzyme]-L-cysteine + [acceptor protein]-L-lysine = [E2 ubiquitin-conjugating enzyme]-L-cysteine + N(6)-ubiquitinyl-[acceptor protein]-L-lysine.. It functions in the pathway protein modification; protein ubiquitination. With respect to regulation, the E3 ubiquitin-protein ligase activity is stimulated by PEX12. In terms of biological role, E3 ubiquitin-protein ligase component of a retrotranslocation channel required for peroxisome organization by mediating export of the PEX5 receptor from peroxisomes to the cytosol, thereby promoting PEX5 recycling. The retrotranslocation channel is composed of PEX2, PEX10 and PEX12; each subunit contributing transmembrane segments that coassemble into an open channel that specifically allows the passage of PEX5 through the peroxisomal membrane. PEX10 also regulates PEX5 recycling by acting as a E3 ubiquitin-protein ligase. When PEX5 recycling is compromised, PEX10 catalyzes polyubiquitination of PEX5 during its passage through the retrotranslocation channel, leading to its degradation. The protein is Peroxisome biogenesis factor 10 of Saccharomyces cerevisiae (strain ATCC 204508 / S288c) (Baker's yeast).